A 275-amino-acid polypeptide reads, in one-letter code: Ammonia transport outward protein 3 (275 aa).

At 1 to 84 (MTSSASSPQD…NCAKYTPHQF (84 aa)) the chain is on the extracellular side. Phosphoserine is present on S4. Residues 85-105 (ANPVPLGLASFSLSCLVLSLI) form a helical membrane-spanning segment. The Cytoplasmic segment spans residues 106–120 (NANVRGVTDGKWALS). Residues 121 to 141 (LFMFFGGAIELFAGLLCFVIG) traverse the membrane as a helical segment. Topologically, residues 142–181 (DTYAMTVFSSFGGFWICYGYGLTDTDNLVSGYTDPTMLNN) are extracellular. A helical membrane pass occupies residues 182–202 (VIGFFLAGWTVFTFLMLMCTL). Residues 203–207 (KSTWG) lie on the Cytoplasmic side of the membrane. The chain crosses the membrane as a helical span at residues 208–228 (LFLLLTFLDLTFLLLCIGTFI). The Extracellular portion of the chain corresponds to 229 to 236 (DNNNLKMA). The chain crosses the membrane as a helical span at residues 237 to 257 (GGYFGILSSCCGWYSLYCSVV). Over 258 to 275 (SPSNSYLAFRAHTMPNAP) the chain is Cytoplasmic.

Belongs to the acetate uptake transporter (AceTr) (TC 2.A.96) family.

The protein localises to the cell membrane. Its function is as follows. Transporter protein required for ammonia export. Induced in rho(0) cells, probably to eliminate the excess ammonia that arises because of a potential defect in ammonia assimilation in those cells. The chain is Ammonia transport outward protein 3 (ATO3) from Saccharomyces cerevisiae (strain ATCC 204508 / S288c) (Baker's yeast).